A 581-amino-acid polypeptide reads, in one-letter code: 2-succinyl-5-enolpyruvyl-6-hydroxy-3-cyclohexene-1-carboxylate synthase (581 aa).

This sequence belongs to the TPP enzyme family. MenD subfamily. In terms of assembly, homodimer. Requires Mg(2+) as cofactor. Mn(2+) is required as a cofactor. The cofactor is thiamine diphosphate.

The catalysed reaction is isochorismate + 2-oxoglutarate + H(+) = 5-enolpyruvoyl-6-hydroxy-2-succinyl-cyclohex-3-ene-1-carboxylate + CO2. The protein operates within quinol/quinone metabolism; 1,4-dihydroxy-2-naphthoate biosynthesis; 1,4-dihydroxy-2-naphthoate from chorismate: step 2/7. It functions in the pathway quinol/quinone metabolism; menaquinone biosynthesis. Catalyzes the thiamine diphosphate-dependent decarboxylation of 2-oxoglutarate and the subsequent addition of the resulting succinic semialdehyde-thiamine pyrophosphate anion to isochorismate to yield 2-succinyl-5-enolpyruvyl-6-hydroxy-3-cyclohexene-1-carboxylate (SEPHCHC). In Chlorobium phaeobacteroides (strain BS1), this protein is 2-succinyl-5-enolpyruvyl-6-hydroxy-3-cyclohexene-1-carboxylate synthase.